Reading from the N-terminus, the 111-residue chain is MLISVLKSKISYATVTGKDLFYVGSITIDSEIMKQANIIENEKVQVVNLNNGERLETYVIKGEPNSKTIALNGPAARRCEIGDQLFIISYAQVDPTRENIKPKLVDLKTGD.

Residue Ser25 is the Schiff-base intermediate with substrate; via pyruvic acid of the active site. Ser25 carries the pyruvic acid (Ser) modification. Substrate is bound at residue Thr57. Tyr58 acts as the Proton donor in catalysis. 73–75 (GPA) is a substrate binding site.

It belongs to the PanD family. Heterooctamer of four alpha and four beta subunits. It depends on pyruvate as a cofactor. Post-translationally, is synthesized initially as an inactive proenzyme, which is activated by self-cleavage at a specific serine bond to produce a beta-subunit with a hydroxyl group at its C-terminus and an alpha-subunit with a pyruvoyl group at its N-terminus.

It localises to the cytoplasm. The enzyme catalyses L-aspartate + H(+) = beta-alanine + CO2. It functions in the pathway cofactor biosynthesis; (R)-pantothenate biosynthesis; beta-alanine from L-aspartate: step 1/1. Catalyzes the pyruvoyl-dependent decarboxylation of aspartate to produce beta-alanine. The protein is Aspartate 1-decarboxylase of Francisella tularensis subsp. holarctica (strain LVS).